The sequence spans 304 residues: Ribonuclease Z (304 aa).

Zn(2+) is bound by residues histidine 63, histidine 65, aspartate 67, histidine 68, histidine 143, aspartate 213, and histidine 271. The active-site Proton acceptor is aspartate 67.

The protein belongs to the RNase Z family. In terms of assembly, homodimer. The cofactor is Zn(2+).

It carries out the reaction Endonucleolytic cleavage of RNA, removing extra 3' nucleotides from tRNA precursor, generating 3' termini of tRNAs. A 3'-hydroxy group is left at the tRNA terminus and a 5'-phosphoryl group is left at the trailer molecule.. Its function is as follows. Zinc phosphodiesterase, which displays some tRNA 3'-processing endonuclease activity. Probably involved in tRNA maturation, by removing a 3'-trailer from precursor tRNA. The polypeptide is Ribonuclease Z (Porphyromonas gingivalis (strain ATCC 33277 / DSM 20709 / CIP 103683 / JCM 12257 / NCTC 11834 / 2561)).